Consider the following 197-residue polypeptide: uncharacterized protein (197 aa).

2 disordered regions span residues M1 to V30 and P115 to L174. Low complexity predominate over residues K21–V30. A compositionally biased stretch (acidic residues) spans K123 to E137. Positions K157–S170 are enriched in basic residues.

This is an uncharacterized protein from Dictyostelium discoideum (Social amoeba).